A 677-amino-acid polypeptide reads, in one-letter code: MFKTSYNLYDLNYPKNDSLTPIRDYKNDYFHKNDDKLPEIVRKPTRKLSKHENKLNDKKFTNKRPASLDLHSIVESLSNKKIYSPINTEIFQNVVRLNLSPQIPNSPHEGCKFYKIVQEFYLSEVEYYNNLLTANNVYRKALNSDPRFKNKLVKLDSSDELLLFGNIDTIASISKILVTAIKDLLLAKQRGKMLDANEWQKIFTKNEVQQQLYSTFDISEAFEQHLLRIKSTYTSYFVSHQKQMELFTTLRMNKNHFFNKWYEYCLKESGCIKLEDILKSPMKRLTQWIDTLETLESCYEDILSPELGLKLSPTRRKYSLFSNKLETEVSEYKSNSMYNFSLTPSEIIQSYDEDQFTHLLKPPDKQNKNICNASRQESNLDNSRVPSLLSGSSSYYSDVSGLEIVTNTSTASAEMINLKMDEETEFFTLADHISKFKKVMKGLLELKKNLLKNDLSGIIDISLRRINAWKKVIECERPSGAFFAHDNLISTMCSSYIDKLHEQKNQVTILKLTELETDVMNPLERIIAHCTTVKSKLKDLQALKKDYMLFLQEKKANVRDIKRDLLGMHFQNLQNQMKRELPVFITLIHDTIECILLNYIKVFLKYLEIIAGGKKYLQKDLENMSLNDSIATGQIKNLDILQCYSKSRYMTKRMVRKDWPFPGDPSGSRVVRKLFEL.

Residue threonine 20 is modified to Phosphothreonine. Serine 67, serine 72, and serine 84 each carry phosphoserine. A Phosphothreonine modification is found at threonine 88. Residues serine 100 and serine 106 each carry the phosphoserine modification. Positions 112 to 326 (KFYKIVQEFY…KYSLFSNKLE (215 aa)) constitute a DH domain.

The protein localises to the cell tip. Functionally, promotes cell fusion during zygote formation. This Saccharomyces cerevisiae (strain ATCC 204508 / S288c) (Baker's yeast) protein is Nuclear fusion protein FUS2 (FUS2).